The primary structure comprises 1389 residues: uncharacterized protein (1389 aa).

Residues 43-94 (STIAQRVSQLENEVAEINVALAEHVNELNSQEKRIDKLEKTVKKKKSNCSDD) adopt a coiled-coil conformation. Residues 294–353 (HKNRRSKSDNSDLSEYSSSNSDDSECTDSDGSSCSTDGSPDCTESENTESHRSHGKKKHR) are disordered. 2 stretches are compositionally biased toward low complexity: residues 304–314 (SDLSEYSSSNS) and 322–335 (SDGSSCSTDGSPDC). WD repeat units lie at residues 867-907 (TFTD…VKHI), 1017-1056 (GYNEGLDIKYSPDQTIVVSGYYNTNPLIIYDGPDGLTPSG), and 1115-1156 (GISN…ILST).

Its subcellular location is the virion. This is an uncharacterized protein from Acanthamoeba polyphaga (Amoeba).